The following is a 234-amino-acid chain: Transcriptional regulatory protein WalR (234 aa).

A Response regulatory domain is found at 3 to 116 (KILIVDDEKP…ELQARVKALL (114 aa)). Aspartate 52 is subject to 4-aspartylphosphate. The segment at residues 133-232 (PQPIQIGDLE…RRGVGYYMRN (100 aa)) is a DNA-binding region (ompR/PhoB-type).

Monomer. Homodimer. Phosphorylated by WalK; can also be dephosphorylated by WalK.

Its subcellular location is the cytoplasm. Member of the two-component regulatory system WalK/WalR that regulates genes involved in cell wall metabolism. Binds to the promoter region of the transcription factor fabT gene in the fabTH-acp operon in vitro. Inhibits transcription of fabT, probably acting in an unphosphorylated form, thereby playing a role in the regulation of fatty acid biosynthesis. Essential for normal growth in vitro. Required for maintaining normal cellular morphology, acting, at least in part, by regulating peptidoglycan hydrolase pcsB. Involved in maintaining expression of WalRK regulon genes in exponentially growing cells. The protein is Transcriptional regulatory protein WalR of Streptococcus pneumoniae serotype 2 (strain D39 / NCTC 7466).